Reading from the N-terminus, the 151-residue chain is Protein gp14 (151 aa).

The protein is Protein gp14 (14) of Salmonella phage P22 (Bacteriophage P22).